The chain runs to 700 residues: Elongation factor G (700 aa).

Residues 8–290 (ERYRNIGISA…GVIDFMPSPI (283 aa)) enclose the tr-type G domain. GTP-binding positions include 17-24 (AHIDAGKT), 88-92 (DTPGH), and 142-145 (NKMD).

The protein belongs to the TRAFAC class translation factor GTPase superfamily. Classic translation factor GTPase family. EF-G/EF-2 subfamily.

The protein resides in the cytoplasm. In terms of biological role, catalyzes the GTP-dependent ribosomal translocation step during translation elongation. During this step, the ribosome changes from the pre-translocational (PRE) to the post-translocational (POST) state as the newly formed A-site-bound peptidyl-tRNA and P-site-bound deacylated tRNA move to the P and E sites, respectively. Catalyzes the coordinated movement of the two tRNA molecules, the mRNA and conformational changes in the ribosome. This Methylibium petroleiphilum (strain ATCC BAA-1232 / LMG 22953 / PM1) protein is Elongation factor G.